Reading from the N-terminus, the 279-residue chain is Glutamate racemase (279 aa).

Residues 13–14 (DS) and 45–46 (YG) each bind substrate. C76 (proton donor/acceptor) is an active-site residue. 77–78 (NT) is a substrate binding site. Catalysis depends on C185, which acts as the Proton donor/acceptor. Position 186–187 (186–187 (TH)) interacts with substrate.

The protein belongs to the aspartate/glutamate racemases family.

It catalyses the reaction L-glutamate = D-glutamate. It participates in cell wall biogenesis; peptidoglycan biosynthesis. Its function is as follows. Provides the (R)-glutamate required for cell wall biosynthesis. In Picosynechococcus sp. (strain ATCC 27264 / PCC 7002 / PR-6) (Agmenellum quadruplicatum), this protein is Glutamate racemase.